A 60-amino-acid chain; its full sequence is Potassium channel toxin alpha-KTx 15.8 (60 aa).

An N-terminal signal peptide occupies residues 1–22 (MKFSSIILLTLLICSMSIFGNC). The residue at position 23 (glutamine 23) is a Pyrrolidone carboxylic acid. 3 cysteine pairs are disulfide-bonded: cysteine 30–cysteine 50, cysteine 35–cysteine 55, and cysteine 39–cysteine 57.

It belongs to the short scorpion toxin superfamily. Potassium channel inhibitor family. Alpha-KTx 15 subfamily. Expressed by the venom gland.

The protein localises to the secreted. In terms of biological role, blocker of A-type voltage-gated potassium channels of cerebellar granular cells. May also inhibit Kv4/KCND when coexpressed with DPP6 or DPP10. The occlusion of the outer entry of the K(+) conducting pore is partially reversible and affects both open and closed channels. It shares the same target in rat brain than BmTX3 (AC Q8I0L5) and AmmTX3 (AC P60208). Also shows a weak inhibition on Kv1.2/KCNA2 and Kv1.3/KCNA3 voltage-gated potassium channels. In Olivierus martensii (Manchurian scorpion), this protein is Potassium channel toxin alpha-KTx 15.8.